Here is a 56-residue protein sequence, read N- to C-terminus: Large ribosomal subunit protein bL33 (56 aa).

It belongs to the bacterial ribosomal protein bL33 family.

The sequence is that of Large ribosomal subunit protein bL33 from Rickettsia typhi (strain ATCC VR-144 / Wilmington).